The chain runs to 124 residues: Large ribosomal subunit protein mL52 (124 aa).

The transit peptide at 1–23 (MAALGMLLSTGVRRLHCGSAARA) directs the protein to the mitochondrion. The tract at residues 99 to 124 (LQEEKRKQQNALKPKGVLLQNPGPSQ) is disordered.

It belongs to the mitochondrion-specific ribosomal protein mL52 family. Component of the mitochondrial ribosome large subunit (39S) which comprises a 16S rRNA and about 50 distinct proteins.

The protein resides in the mitochondrion. This chain is Large ribosomal subunit protein mL52 (MRPL52), found in Bos taurus (Bovine).